We begin with the raw amino-acid sequence, 533 residues long: Decreased expression in renal and prostate cancer protein (533 aa).

Positions Met-1–Pro-12 are enriched in basic and acidic residues. 4 disordered regions span residues Met-1–Val-31, Gln-67–Arg-164, Met-177–Gly-259, and Ala-299–Ala-350. A Phosphoserine modification is found at Ser-160. Over residues Ala-299–Thr-309 the composition is skewed to polar residues. Arg-368 is subject to Asymmetric dimethylarginine. At Arg-396 the chain carries Omega-N-methylarginine. Position 432 is a phosphoserine (Ser-432).

The protein belongs to the DERPC family.

The protein resides in the nucleus. Potential tumor suppressor. The protein is Decreased expression in renal and prostate cancer protein of Mus musculus (Mouse).